Consider the following 393-residue polypeptide: Phospholipid-transporting ATPase accessory subunit CRF1 (393 aa).

Residues 1 to 46 (MGLILRWKEKKQLSSKQNAQKSRKPANTSFRQQRLKAWQPILSPQS) are Cytoplasmic-facing. A helical membrane pass occupies residues 47 to 67 (VLPLLILMACVFAPIGIGLVV). Residues 68-334 (STISVQRLVV…NSIIGAGNEA (267 aa)) are Lumenal-facing. Residues 70-332 (ISVQRLVVNY…TTNSIIGAGN (263 aa)) form a confers specificity for binding DNF3 region. 7 N-linked (GlcNAc...) asparagine glycosylation sites follow: Asn-78, Asn-123, Asn-187, Asn-202, Asn-213, Asn-240, and Asn-291. Cystine bridges form between Cys-82-Cys-126 and Cys-179-Cys-193. Residues 335–355 (LGIVYLIVAGIATLFAILFLI) form a helical membrane-spanning segment. The Cytoplasmic segment spans residues 356–393 (KVIFKPRPMHDHSYLNFENSDTPFDESSVVSIPLREIL).

The protein belongs to the CDC50/LEM3 family. Component of a flippase complex consisting of DNF3 and YNR048W/CRF1. Interacts with DNF3; the interaction is direct and required for proper expression and endoplasmic reticulum (ER) export of either partner.

The protein resides in the golgi apparatus. It is found in the trans-Golgi network membrane. In terms of biological role, accessory component of a P4-ATPase flippase complex which catalyzes the hydrolysis of ATP coupled to the transport of phosphatidylcholine and small amounts of phosphatidylethanolamine from the lumen to the cytosolic leaflet of the trans-Golgi network and ensures the maintenance of asymmetric distribution of phospholipids. May be involved in transport from early endosomes to the trans-Golgi network (TGN). The protein is Phospholipid-transporting ATPase accessory subunit CRF1 of Saccharomyces cerevisiae (strain ATCC 204508 / S288c) (Baker's yeast).